The following is a 96-amino-acid chain: Co-chaperonin GroES (96 aa).

Belongs to the GroES chaperonin family. Heptamer of 7 subunits arranged in a ring. Interacts with the chaperonin GroEL.

The protein resides in the cytoplasm. In terms of biological role, together with the chaperonin GroEL, plays an essential role in assisting protein folding. The GroEL-GroES system forms a nano-cage that allows encapsulation of the non-native substrate proteins and provides a physical environment optimized to promote and accelerate protein folding. GroES binds to the apical surface of the GroEL ring, thereby capping the opening of the GroEL channel. The protein is Co-chaperonin GroES of Chromohalobacter salexigens (strain ATCC BAA-138 / DSM 3043 / CIP 106854 / NCIMB 13768 / 1H11).